A 104-amino-acid chain; its full sequence is Pyrimidine/purine nucleoside phosphorylase (104 aa).

This sequence belongs to the nucleoside phosphorylase PpnP family.

The enzyme catalyses a purine D-ribonucleoside + phosphate = a purine nucleobase + alpha-D-ribose 1-phosphate. It catalyses the reaction adenosine + phosphate = alpha-D-ribose 1-phosphate + adenine. It carries out the reaction cytidine + phosphate = cytosine + alpha-D-ribose 1-phosphate. The catalysed reaction is guanosine + phosphate = alpha-D-ribose 1-phosphate + guanine. The enzyme catalyses inosine + phosphate = alpha-D-ribose 1-phosphate + hypoxanthine. It catalyses the reaction thymidine + phosphate = 2-deoxy-alpha-D-ribose 1-phosphate + thymine. It carries out the reaction uridine + phosphate = alpha-D-ribose 1-phosphate + uracil. The catalysed reaction is xanthosine + phosphate = alpha-D-ribose 1-phosphate + xanthine. Catalyzes the phosphorolysis of diverse nucleosides, yielding D-ribose 1-phosphate and the respective free bases. Can use uridine, adenosine, guanosine, cytidine, thymidine, inosine and xanthosine as substrates. Also catalyzes the reverse reactions. The chain is Pyrimidine/purine nucleoside phosphorylase from Herminiimonas arsenicoxydans.